Consider the following 419-residue polypeptide: Tyrosine--tRNA ligase (419 aa).

Residue Tyr-42 coordinates L-tyrosine. Positions 47 to 56 (CTAPSLHVGS) match the 'HIGH' region motif. 2 residues coordinate L-tyrosine: Tyr-179 and Gln-183. The 'KMSKS' region motif lies at 239–243 (KMGKT). Residue Lys-242 participates in ATP binding. Residues 353-419 (LGVLAAFVKA…RKRHVLLKLV (67 aa)) enclose the S4 RNA-binding domain.

Belongs to the class-I aminoacyl-tRNA synthetase family. TyrS type 1 subfamily. In terms of assembly, homodimer.

It localises to the cytoplasm. It catalyses the reaction tRNA(Tyr) + L-tyrosine + ATP = L-tyrosyl-tRNA(Tyr) + AMP + diphosphate + H(+). Catalyzes the attachment of tyrosine to tRNA(Tyr) in a two-step reaction: tyrosine is first activated by ATP to form Tyr-AMP and then transferred to the acceptor end of tRNA(Tyr). The sequence is that of Tyrosine--tRNA ligase from Methylocella silvestris (strain DSM 15510 / CIP 108128 / LMG 27833 / NCIMB 13906 / BL2).